We begin with the raw amino-acid sequence, 138 residues long: Transcription antitermination protein NusB (138 aa).

It belongs to the NusB family.

Functionally, involved in transcription antitermination. Required for transcription of ribosomal RNA (rRNA) genes. Binds specifically to the boxA antiterminator sequence of the ribosomal RNA (rrn) operons. This Geobacter sulfurreducens (strain ATCC 51573 / DSM 12127 / PCA) protein is Transcription antitermination protein NusB.